A 340-amino-acid polypeptide reads, in one-letter code: DNA repair protein RAD51 homolog B (340 aa).

Positions 1–22 (MSSSSAHQKASPPIEEEATEHG) are disordered. Residues 49-78 (TVESVAYSPRKDLLQIKGISEAKVDKIIEA) enclose the HhH domain. 128-135 (GEFRSGKT) is an ATP binding site.

This sequence belongs to the RecA family. RAD51 subfamily. Self-associates and may interact with XRCC3 homolog. In terms of tissue distribution, highly expressed in mitotic and meiotic tissues, but low levels in differentiated tissues.

It localises to the nucleus. Binds to single and double-stranded DNA and exhibits DNA-dependent ATPase activity. Unwinds duplex DNA. Component of the meiotic recombination pathway. Seems to play a role in mediating chromosome homology search, chromosome pairing and synapsis at early stages and probably chromosome crossing-over at later stages in meiosis. Probably is involved in the repair of meiotic double strand breaks (DBSs) and in homologous recombination. In Zea mays (Maize), this protein is DNA repair protein RAD51 homolog B (RAD51B).